The sequence spans 241 residues: Pyridoxine 5'-phosphate synthase (241 aa).

Asn7 is a 3-amino-2-oxopropyl phosphate binding site. Residue 9-10 participates in 1-deoxy-D-xylulose 5-phosphate binding; that stretch reads DH. Arg18 is a binding site for 3-amino-2-oxopropyl phosphate. The active-site Proton acceptor is the His43. Residues Arg45 and His50 each coordinate 1-deoxy-D-xylulose 5-phosphate. The active-site Proton acceptor is Glu70. Position 100 (Thr100) interacts with 1-deoxy-D-xylulose 5-phosphate. His191 (proton donor) is an active-site residue. 3-amino-2-oxopropyl phosphate is bound by residues Gly192 and 213–214; that span reads GH.

Belongs to the PNP synthase family. As to quaternary structure, homooctamer; tetramer of dimers.

It is found in the cytoplasm. It catalyses the reaction 3-amino-2-oxopropyl phosphate + 1-deoxy-D-xylulose 5-phosphate = pyridoxine 5'-phosphate + phosphate + 2 H2O + H(+). It participates in cofactor biosynthesis; pyridoxine 5'-phosphate biosynthesis; pyridoxine 5'-phosphate from D-erythrose 4-phosphate: step 5/5. Catalyzes the complicated ring closure reaction between the two acyclic compounds 1-deoxy-D-xylulose-5-phosphate (DXP) and 3-amino-2-oxopropyl phosphate (1-amino-acetone-3-phosphate or AAP) to form pyridoxine 5'-phosphate (PNP) and inorganic phosphate. In Acidithiobacillus ferrooxidans (strain ATCC 23270 / DSM 14882 / CIP 104768 / NCIMB 8455) (Ferrobacillus ferrooxidans (strain ATCC 23270)), this protein is Pyridoxine 5'-phosphate synthase.